A 334-amino-acid chain; its full sequence is Glycerol-1-phosphate dehydrogenase [NAD(P)+] (334 aa).

Residues 77 to 81 (GRPID) and 99 to 102 (TTAS) each bind NAD(+). Position 104 (Asp104) interacts with substrate. Ser108 is a binding site for NAD(+). Asp147 serves as a coordination point for substrate. Zn(2+) is bound by residues Asp147 and His225. Position 229 (His229) interacts with substrate. Zn(2+) is bound at residue His246.

It belongs to the glycerol-1-phosphate dehydrogenase family. Zn(2+) serves as cofactor.

The protein localises to the cytoplasm. The enzyme catalyses sn-glycerol 1-phosphate + NAD(+) = dihydroxyacetone phosphate + NADH + H(+). It carries out the reaction sn-glycerol 1-phosphate + NADP(+) = dihydroxyacetone phosphate + NADPH + H(+). It functions in the pathway membrane lipid metabolism; glycerophospholipid metabolism. Its function is as follows. Catalyzes the NAD(P)H-dependent reduction of dihydroxyacetonephosphate (DHAP or glycerone phosphate) to glycerol 1-phosphate (G1P). The G1P thus generated is used as the glycerophosphate backbone of phospholipids in the cellular membranes of Archaea. In Methanococcus maripaludis (strain C6 / ATCC BAA-1332), this protein is Glycerol-1-phosphate dehydrogenase [NAD(P)+].